A 154-amino-acid polypeptide reads, in one-letter code: Transcriptional repressor NrdR (154 aa).

The disordered stretch occupies residues 1–22; it reads MECPNCHKNASRVIDSRPSDEN. The segment at 3–34 is a zinc-finger region; the sequence is CPNCHKNASRVIDSRPSDENRAIRRRRECENC. Residues 49–139 enclose the ATP-cone domain; it reads LLVVKNDGTR…IYRQFKDVSG (91 aa).

It belongs to the NrdR family. Requires Zn(2+) as cofactor.

Negatively regulates transcription of bacterial ribonucleotide reductase nrd genes and operons by binding to NrdR-boxes. The chain is Transcriptional repressor NrdR from Lactobacillus johnsonii (strain CNCM I-12250 / La1 / NCC 533).